Consider the following 157-residue polypeptide: UPF0262 protein Avi_0642 (157 aa).

This sequence belongs to the UPF0262 family.

In Allorhizobium ampelinum (strain ATCC BAA-846 / DSM 112012 / S4) (Agrobacterium vitis (strain S4)), this protein is UPF0262 protein Avi_0642.